The sequence spans 518 residues: Putative succinate-semialdehyde dehydrogenase [NADP(+)] 2 (518 aa).

Residues 157-158 (WN), 181-184 (KPDS), and 232-233 (GS) each bind NADP(+). E254 functions as the Proton acceptor in the catalytic mechanism. L255 contacts NADP(+). C288 acts as the Nucleophile in catalysis. E386 is a binding site for NADP(+).

Belongs to the aldehyde dehydrogenase family.

It carries out the reaction succinate semialdehyde + NADP(+) + H2O = succinate + NADPH + 2 H(+). In terms of biological role, catalyzes the NADP(+)-dependent oxidation of succinate semialdehyde to succinate. Although it has succinate semialdehyde dehydrogenase activity, is likely to act physiologically on a different aldehyde(s). This is Putative succinate-semialdehyde dehydrogenase [NADP(+)] 2 (gabD2) from Mycobacterium bovis (strain ATCC BAA-935 / AF2122/97).